Here is a 71-residue protein sequence, read N- to C-terminus: MTELAIGIAAGLAAIGGAIGVAIIVKAVIEGTARQPEQRGTLQTLMFIGAPLAEAVPIIAIVIAFLLFFMG.

The next 2 membrane-spanning stretches (helical) occupy residues 5 to 25 and 47 to 67; these read AIGI…AIIV and FIGA…AFLL.

This sequence belongs to the ATPase C chain family. As to quaternary structure, F-type ATPases have 2 components, F(1) - the catalytic core - and F(0) - the membrane proton channel. F(1) has five subunits: alpha(3), beta(3), gamma(1), delta(1), epsilon(1). F(0) has three main subunits: a(1), b(2) and c(10-14). The alpha and beta chains form an alternating ring which encloses part of the gamma chain. F(1) is attached to F(0) by a central stalk formed by the gamma and epsilon chains, while a peripheral stalk is formed by the delta and b chains.

It is found in the cell membrane. Its function is as follows. F(1)F(0) ATP synthase produces ATP from ADP in the presence of a proton or sodium gradient. F-type ATPases consist of two structural domains, F(1) containing the extramembraneous catalytic core and F(0) containing the membrane proton channel, linked together by a central stalk and a peripheral stalk. During catalysis, ATP synthesis in the catalytic domain of F(1) is coupled via a rotary mechanism of the central stalk subunits to proton translocation. In terms of biological role, key component of the F(0) channel; it plays a direct role in translocation across the membrane. A homomeric c-ring of between 10-14 subunits forms the central stalk rotor element with the F(1) delta and epsilon subunits. This Shouchella clausii (strain KSM-K16) (Alkalihalobacillus clausii) protein is ATP synthase subunit c.